Consider the following 228-residue polypeptide: Cytochrome c oxidase subunit 2 (228 aa).

At 1-26 the chain is on the mitochondrial intermembrane side; sequence MPNWGQVMFQDAASSVMLQLVSFHDH. The chain crosses the membrane as a helical span at residues 27–47; sequence ALLVLTLVLTVVGYALLALML. Over 48–60 the chain is Mitochondrial matrix; the sequence is NKQVNRYIMEAQT. A helical transmembrane segment spans residues 61–81; it reads VETIWTILPALILLVLALPSL. Topologically, residues 82–228 are mitochondrial intermembrane; sequence RILYITDEVS…FMSWVSNFKP (147 aa). His-161, Cys-196, Glu-198, Cys-200, His-204, and Met-207 together coordinate Cu cation. Mg(2+) is bound at residue Glu-198.

This sequence belongs to the cytochrome c oxidase subunit 2 family. In terms of assembly, component of the cytochrome c oxidase (complex IV, CIV), a multisubunit enzyme composed of a catalytic core of 3 subunits and several supernumerary subunits. The complex exists as a monomer or a dimer and forms supercomplexes (SCs) in the inner mitochondrial membrane with ubiquinol-cytochrome c oxidoreductase (cytochrome b-c1 complex, complex III, CIII). Requires Cu cation as cofactor.

It is found in the mitochondrion inner membrane. It catalyses the reaction 4 Fe(II)-[cytochrome c] + O2 + 8 H(+)(in) = 4 Fe(III)-[cytochrome c] + 2 H2O + 4 H(+)(out). Component of the cytochrome c oxidase, the last enzyme in the mitochondrial electron transport chain which drives oxidative phosphorylation. The respiratory chain contains 3 multisubunit complexes succinate dehydrogenase (complex II, CII), ubiquinol-cytochrome c oxidoreductase (cytochrome b-c1 complex, complex III, CIII) and cytochrome c oxidase (complex IV, CIV), that cooperate to transfer electrons derived from NADH and succinate to molecular oxygen, creating an electrochemical gradient over the inner membrane that drives transmembrane transport and the ATP synthase. Cytochrome c oxidase is the component of the respiratory chain that catalyzes the reduction of oxygen to water. Electrons originating from reduced cytochrome c in the intermembrane space (IMS) are transferred via the dinuclear copper A center (CU(A)) of subunit 2 and heme A of subunit 1 to the active site in subunit 1, a binuclear center (BNC) formed by heme A3 and copper B (CU(B)). The BNC reduces molecular oxygen to 2 water molecules using 4 electrons from cytochrome c in the IMS and 4 protons from the mitochondrial matrix. This chain is Cytochrome c oxidase subunit 2 (COII), found in Lumbricus terrestris (Common earthworm).